Reading from the N-terminus, the 252-residue chain is 3-dehydroquinate dehydratase (252 aa).

3-dehydroquinate is bound by residues Ser-21, Glu-46–Arg-48, and Arg-82. Residue His-143 is the Proton donor/acceptor of the active site. Lys-170 (schiff-base intermediate with substrate) is an active-site residue. Residues Arg-213, Ser-232, and Gln-236 each contribute to the 3-dehydroquinate site.

It belongs to the type-I 3-dehydroquinase family. Homodimer.

The enzyme catalyses 3-dehydroquinate = 3-dehydroshikimate + H2O. It participates in metabolic intermediate biosynthesis; chorismate biosynthesis; chorismate from D-erythrose 4-phosphate and phosphoenolpyruvate: step 3/7. Its function is as follows. Involved in the third step of the chorismate pathway, which leads to the biosynthesis of aromatic amino acids. Catalyzes the cis-dehydration of 3-dehydroquinate (DHQ) and introduces the first double bond of the aromatic ring to yield 3-dehydroshikimate. In Escherichia coli O127:H6 (strain E2348/69 / EPEC), this protein is 3-dehydroquinate dehydratase.